The sequence spans 118 residues: Large ribosomal subunit protein bL20 (118 aa).

The protein belongs to the bacterial ribosomal protein bL20 family.

Binds directly to 23S ribosomal RNA and is necessary for the in vitro assembly process of the 50S ribosomal subunit. It is not involved in the protein synthesizing functions of that subunit. The sequence is that of Large ribosomal subunit protein bL20 from Edwardsiella ictaluri (strain 93-146).